We begin with the raw amino-acid sequence, 158 residues long: 2-C-methyl-D-erythritol 2,4-cyclodiphosphate synthase (158 aa).

A divalent metal cation contacts are provided by aspartate 9 and histidine 11. Residues 9–11 (DVH) and 35–36 (HS) each bind 4-CDP-2-C-methyl-D-erythritol 2-phosphate. Histidine 43 is an a divalent metal cation binding site. 4-CDP-2-C-methyl-D-erythritol 2-phosphate-binding positions include 57–59 (DIG), 62–66 (FPDTD), 133–136 (TTTE), phenylalanine 140, and arginine 143.

This sequence belongs to the IspF family. In terms of assembly, homotrimer. It depends on a divalent metal cation as a cofactor.

It carries out the reaction 4-CDP-2-C-methyl-D-erythritol 2-phosphate = 2-C-methyl-D-erythritol 2,4-cyclic diphosphate + CMP. The protein operates within isoprenoid biosynthesis; isopentenyl diphosphate biosynthesis via DXP pathway; isopentenyl diphosphate from 1-deoxy-D-xylulose 5-phosphate: step 4/6. Involved in the biosynthesis of isopentenyl diphosphate (IPP) and dimethylallyl diphosphate (DMAPP), two major building blocks of isoprenoid compounds. Catalyzes the conversion of 4-diphosphocytidyl-2-C-methyl-D-erythritol 2-phosphate (CDP-ME2P) to 2-C-methyl-D-erythritol 2,4-cyclodiphosphate (ME-CPP) with a corresponding release of cytidine 5-monophosphate (CMP). This chain is 2-C-methyl-D-erythritol 2,4-cyclodiphosphate synthase, found in Haemophilus influenzae (strain 86-028NP).